A 108-amino-acid chain; its full sequence is Transcription initiation factor IIA subunit 2 (108 aa).

Belongs to the TFIIA subunit 2 family. As to quaternary structure, TFIIA is a heterodimer of the large unprocessed subunit 1 and a small subunit gamma. It was originally believed to be a heterotrimer of an alpha, a beta and a gamma subunit. Interacts with NCOA6 general coactivator. TFIIA forms a complex with TBP.

The protein resides in the nucleus. Its function is as follows. TFIIA is a component of the transcription machinery of RNA polymerase II and plays an important role in transcriptional activation. TFIIA in a complex with TBP mediates transcriptional activity. This is Transcription initiation factor IIA subunit 2 (gtf2a2) from Oncorhynchus mykiss (Rainbow trout).